We begin with the raw amino-acid sequence, 150 residues long: Large ribosomal subunit protein bL9 (150 aa).

It belongs to the bacterial ribosomal protein bL9 family.

Binds to the 23S rRNA. This Wigglesworthia glossinidia brevipalpis protein is Large ribosomal subunit protein bL9.